We begin with the raw amino-acid sequence, 851 residues long: DNA mismatch repair protein MutS (851 aa).

602 to 609 lines the ATP pocket; that stretch reads GPNMSGKS.

It belongs to the DNA mismatch repair MutS family.

Its function is as follows. This protein is involved in the repair of mismatches in DNA. It is possible that it carries out the mismatch recognition step. This protein has a weak ATPase activity. In Streptococcus pyogenes serotype M12 (strain MGAS2096), this protein is DNA mismatch repair protein MutS.